We begin with the raw amino-acid sequence, 190 residues long: Putative manganese efflux pump MntP (190 aa).

Transmembrane regions (helical) follow at residues 3–23, 41–61, 62–82, 105–127, 143–163, and 168–188; these read MSATLILAFGMSMDAFAASIG, LIFGVIEAITPLIGWALGFFA, SQYILEWDHWVAFTLLLILGG, LALLVCTAIATSLDAMAIGVGLA, ATMIMVTLGMMIGRYIGPILG, and VMGGLVLIGIGCNILYEHLGY.

This sequence belongs to the MntP (TC 9.B.29) family.

The protein localises to the cell inner membrane. Functionally, probably functions as a manganese efflux pump. The sequence is that of Putative manganese efflux pump MntP from Pectobacterium carotovorum subsp. carotovorum (strain PC1).